The sequence spans 405 residues: MAASGKTSKSEPNHVIFKKISRDKSVTIYLGNRDYIDHVSQVQPVDGVVLVDPDLVKGKKVYVTLTCAFRYGQEDIDVIGLTFRRDLYFSRVQVYPPVGAASTPTKLQESLLKKLGSNTYPFLLTFPDYLPCSVMLQPAPQDSGKSCGVDFEVKAFATDSTDAEEDKIPKKSSVRLLIRKVQHAPLEMGPQPRAEAAWQFFMSDKPLHLAVSLNKEIYFHGEPIPVTVTVTNNTEKTVKKIKAFVEQVANVVLYSSDYYVKPVAMEEAQEKVPPNSTLTKTLTLLPLLANNRERRGIALDGKIKHEDTNLASSTIIKEGIDRTVLGILVSYQIKVKLTVSGFLGELTSSEVATEVPFRLMHPQPEDPAKESYQDANLVFEEFARHNLKDAGEAEEGKRDKNDVDE.

At Thr-234 the chain carries Phosphothreonine.

It belongs to the arrestin family. In terms of assembly, monomer. Homodimer. Homotetramer. Interacts with RHO (via the phosphorylated C-terminus). In terms of tissue distribution, detected in retina, in the proximal portion of the outer segment of rod photoreceptor cells (at protein level).

It localises to the cell projection. The protein localises to the cilium. Its subcellular location is the photoreceptor outer segment. It is found in the membrane. Functionally, binds to photoactivated, phosphorylated RHO and terminates RHO signaling via G-proteins by competing with G-proteins for the same binding site on RHO. May play a role in preventing light-dependent degeneration of retinal photoreceptor cells. The sequence is that of S-arrestin (SAG) from Homo sapiens (Human).